The following is a 191-amino-acid chain: Peptidyl-tRNA hydrolase (191 aa).

Residue Tyr14 coordinates tRNA. The active-site Proton acceptor is His19. TRNA contacts are provided by Tyr65, Asn67, and Asn113.

This sequence belongs to the PTH family. Monomer.

Its subcellular location is the cytoplasm. It catalyses the reaction an N-acyl-L-alpha-aminoacyl-tRNA + H2O = an N-acyl-L-amino acid + a tRNA + H(+). Functionally, hydrolyzes ribosome-free peptidyl-tRNAs (with 1 or more amino acids incorporated), which drop off the ribosome during protein synthesis, or as a result of ribosome stalling. Catalyzes the release of premature peptidyl moieties from peptidyl-tRNA molecules trapped in stalled 50S ribosomal subunits, and thus maintains levels of free tRNAs and 50S ribosomes. The protein is Peptidyl-tRNA hydrolase of Nitrosospira multiformis (strain ATCC 25196 / NCIMB 11849 / C 71).